Consider the following 382-residue polypeptide: tRNA(Met) cytidine acetate ligase (382 aa).

ATP is bound by residues 9–22 (VTEYNPFHNGHAYQ), glycine 103, asparagine 152, and arginine 177.

The protein belongs to the TmcAL family.

The protein localises to the cytoplasm. The catalysed reaction is cytidine(34) in elongator tRNA(Met) + acetate + ATP = N(4)-acetylcytidine(34) in elongator tRNA(Met) + AMP + diphosphate. In terms of biological role, catalyzes the formation of N(4)-acetylcytidine (ac(4)C) at the wobble position of elongator tRNA(Met), using acetate and ATP as substrates. First activates an acetate ion to form acetyladenylate (Ac-AMP) and then transfers the acetyl group to tRNA to form ac(4)C34. The sequence is that of tRNA(Met) cytidine acetate ligase from Levilactobacillus brevis (strain ATCC 367 / BCRC 12310 / CIP 105137 / JCM 1170 / LMG 11437 / NCIMB 947 / NCTC 947) (Lactobacillus brevis).